Here is a 197-residue protein sequence, read N- to C-terminus: Glycerol-3-phosphate acyltransferase (197 aa).

5 consecutive transmembrane segments (helical) span residues L6–V26, A58–L78, M82–F102, A116–A136, and F157–I177.

Belongs to the PlsY family. As to quaternary structure, probably interacts with PlsX.

It is found in the cell inner membrane. It carries out the reaction an acyl phosphate + sn-glycerol 3-phosphate = a 1-acyl-sn-glycero-3-phosphate + phosphate. It functions in the pathway lipid metabolism; phospholipid metabolism. Functionally, catalyzes the transfer of an acyl group from acyl-phosphate (acyl-PO(4)) to glycerol-3-phosphate (G3P) to form lysophosphatidic acid (LPA). This enzyme utilizes acyl-phosphate as fatty acyl donor, but not acyl-CoA or acyl-ACP. In Ruthia magnifica subsp. Calyptogena magnifica, this protein is Glycerol-3-phosphate acyltransferase.